Reading from the N-terminus, the 332-residue chain is L-lactate dehydrogenase A chain (332 aa).

The residue at position 2 (Ala2) is an N-acetylalanine. The residue at position 5 (Lys5) is an N6-acetyllysine; alternate. Lys5 carries the N6-succinyllysine; alternate modification. The residue at position 10 (Tyr10) is a Phosphotyrosine. An N6-acetyllysine modification is found at Lys14. Thr18 is subject to Phosphothreonine. 29–57 (GAVGMACAISILMKDLADELALVDVIEDK) serves as a coordination point for NAD(+). The residue at position 57 (Lys57) is an N6-acetyllysine; alternate. A Glycyl lysine isopeptide (Lys-Gly) (interchain with G-Cter in SUMO2); alternate cross-link involves residue Lys57. Residue Lys81 is modified to N6-acetyllysine. An NAD(+)-binding site is contributed by Arg99. Arg106 is a binding site for substrate. Position 118 is an N6-acetyllysine; alternate (Lys118). At Lys118 the chain carries N6-succinyllysine; alternate. N6-acetyllysine is present on Lys126. Asn138 provides a ligand contact to NAD(+). The substrate site is built by Asn138 and Arg169. The active-site Proton acceptor is His193. Residues Lys224 and Lys232 each carry the N6-acetyllysine modification. Tyr239 bears the Phosphotyrosine mark. At Lys243 the chain carries N6-acetyllysine. Thr248 serves as a coordination point for substrate. Phosphothreonine is present on Thr309. Phosphoserine is present on Ser310. Lys318 carries the N6-acetyllysine; alternate modification. Position 318 is an N6-succinyllysine; alternate (Lys318). The residue at position 322 (Thr322) is a Phosphothreonine.

This sequence belongs to the LDH/MDH superfamily. LDH family. As to quaternary structure, homotetramer. Interacts with PTEN upstream reading frame protein MP31. Interacts with folliculin FLCN; the interaction is direct and inhibits enzymatic activity. Post-translationally, ISGylated. As to expression, predominantly expressed in anaerobic tissues such as skeletal muscle and liver.

The protein localises to the cytoplasm. It carries out the reaction (S)-lactate + NAD(+) = pyruvate + NADH + H(+). Its pathway is fermentation; pyruvate fermentation to lactate; (S)-lactate from pyruvate: step 1/1. Its activity is regulated as follows. Fermentation of pyruvate to lactate is inhibited when bound to folliculin FLCN, perhaps partly by FLCN preventing binding of cofactor NADH. In terms of biological role, interconverts simultaneously and stereospecifically pyruvate and lactate with concomitant interconversion of NADH and NAD(+). In Homo sapiens (Human), this protein is L-lactate dehydrogenase A chain.